The following is a 37-amino-acid chain: Cytochrome b6-f complex subunit 5 (37 aa).

The chain crosses the membrane as a helical span at residues 5–25 (LLSGVVLGLILVTLSGLFFAA).

It belongs to the PetG family. The 4 large subunits of the cytochrome b6-f complex are cytochrome b6, subunit IV (17 kDa polypeptide, PetD), cytochrome f and the Rieske protein, while the 4 small subunits are PetG, PetL, PetM and PetN. The complex functions as a dimer.

It is found in the cellular thylakoid membrane. Its function is as follows. Component of the cytochrome b6-f complex, which mediates electron transfer between photosystem II (PSII) and photosystem I (PSI), cyclic electron flow around PSI, and state transitions. PetG is required for either the stability or assembly of the cytochrome b6-f complex. In Trichodesmium erythraeum (strain IMS101), this protein is Cytochrome b6-f complex subunit 5.